The following is a 153-amino-acid chain: Putative OPA3-like protein CG43998 (153 aa).

Residues 101-153 (ELSKTYTKTKKQNQEIEDQKRVLDECVDCISADVERNQREINWIKAALKNVEK) are a coiled coil.

Belongs to the OPA3 family.

This is Putative OPA3-like protein CG43998 from Drosophila melanogaster (Fruit fly).